Consider the following 592-residue polypeptide: A-type ATP synthase subunit A (592 aa).

231-238 contributes to the ATP binding site; the sequence is GGFGTGKT.

Belongs to the ATPase alpha/beta chains family. As to quaternary structure, has multiple subunits with at least A(3), B(3), C, D, E, F, H, I and proteolipid K(x).

The protein resides in the cell membrane. It carries out the reaction ATP + H2O + 4 H(+)(in) = ADP + phosphate + 5 H(+)(out). Component of the A-type ATP synthase that produces ATP from ADP in the presence of a proton gradient across the membrane. The A chain is the catalytic subunit. The sequence is that of A-type ATP synthase subunit A from Staphylothermus marinus (strain ATCC 43588 / DSM 3639 / JCM 9404 / F1).